Reading from the N-terminus, the 540-residue chain is Glucose-6-phosphate isomerase (540 aa).

Glu351 serves as the catalytic Proton donor. Active-site residues include His382 and Lys506.

This sequence belongs to the GPI family.

It is found in the cytoplasm. The enzyme catalyses alpha-D-glucose 6-phosphate = beta-D-fructose 6-phosphate. It participates in carbohydrate biosynthesis; gluconeogenesis. It functions in the pathway carbohydrate degradation; glycolysis; D-glyceraldehyde 3-phosphate and glycerone phosphate from D-glucose: step 2/4. Its function is as follows. Catalyzes the reversible isomerization of glucose-6-phosphate to fructose-6-phosphate. The sequence is that of Glucose-6-phosphate isomerase from Corynebacterium glutamicum (strain R).